Reading from the N-terminus, the 347-residue chain is MNIDMAALHAIEVDRGISVNELLETIKSALLTAYRHTQGHQTDARIEIDRKTGVVRVIARETDEAGNLISEWDDTPEGFGRIAATTARQVMLQRFRDAENERTYGEFSTREGEIVAGVIQRDSRANARGLVVVRIGTETKASEGVIPAAEQVPGESYEHGNRLRCYVVGVTRGAREPLITLSRTHPNLVRKLFSLEVPEIADGSVEIVAVAREAGHRSKIAVRSNVAGLNAKGACIGPMGQRVRNVMSELSGEKIDIIDYDDDPARFVANALSPAKVVSVSVIDQTARAARVVVPDFQLSLAIGKEGQNARLAARLTGWRIDIRGDAPPPPPGQPEPGVSRGMAHDR.

The S1 motif domain occupies 112–184 (GEIVAGVIQR…REPLITLSRT (73 aa)). Positions 287 to 347 (ARAARVVVPD…GVSRGMAHDR (61 aa)) constitute a KH domain. A disordered region spans residues 322–347 (DIRGDAPPPPPGQPEPGVSRGMAHDR).

This sequence belongs to the NusA family. In terms of assembly, monomer. Binds directly to the core enzyme of the DNA-dependent RNA polymerase and to nascent RNA.

Its subcellular location is the cytoplasm. Functionally, participates in both transcription termination and antitermination. This Mycobacterium bovis (strain ATCC BAA-935 / AF2122/97) protein is Transcription termination/antitermination protein NusA.